Consider the following 376-residue polypeptide: Branched-chain-amino-acid aminotransferase, cytosolic (376 aa).

Lys-202 carries the post-translational modification N6-(pyridoxal phosphate)lysine.

Belongs to the class-IV pyridoxal-phosphate-dependent aminotransferase family. Pyridoxal 5'-phosphate is required as a cofactor.

It is found in the cytoplasm. It catalyses the reaction L-leucine + 2-oxoglutarate = 4-methyl-2-oxopentanoate + L-glutamate. The enzyme catalyses L-isoleucine + 2-oxoglutarate = (S)-3-methyl-2-oxopentanoate + L-glutamate. The catalysed reaction is L-valine + 2-oxoglutarate = 3-methyl-2-oxobutanoate + L-glutamate. It carries out the reaction a 2-oxocarboxylate + L-methionine = 4-methylsulfanyl-2-oxobutanoate + an L-alpha-amino acid. The protein operates within amino-acid biosynthesis; L-isoleucine biosynthesis; L-isoleucine from 2-oxobutanoate: step 4/4. Its pathway is amino-acid biosynthesis; L-leucine biosynthesis; L-leucine from 3-methyl-2-oxobutanoate: step 4/4. It participates in amino-acid biosynthesis; L-valine biosynthesis; L-valine from pyruvate: step 4/4. It functions in the pathway amino-acid biosynthesis; L-methionine biosynthesis via salvage pathway; L-methionine from S-methyl-5-thio-alpha-D-ribose 1-phosphate: step 6/6. Functionally, cytoplasmic isozyme of branched-chain-amino-acid aminotransferase, which catalyzes the first reaction in the catabolism of the essential branched chain amino acids (BCAAs) leucine, isoleucine, and valine. Catalyzes the formation of methionine from 2-keto-4-methylthiobutyrate (KMTB) in the methionine salvage pathway primarily using BCAAs (leucine, isoleucine, and valine) as well as lysine and proline as the amino donors. Involved in cell cycle regulation. This is Branched-chain-amino-acid aminotransferase, cytosolic from Saccharomyces cerevisiae (strain ATCC 204508 / S288c) (Baker's yeast).